The chain runs to 557 residues: Vanadium-dependent bromoperoxidase (557 aa).

The residue at position 1 (Gln-1) is a Pyrrolidone carboxylic acid. The tract at residues 1 to 22 (QTCSTSDDADDPTPPNERDDEA) is disordered. Cys-77 and Cys-86 are oxidised to a cystine. Vanadate contacts are provided by Lys-341 and Arg-349. Residue His-411 is part of the active site. Ser-416, Gly-417, and His-418 together coordinate vanadate. His-418 is a catalytic residue. Cys-441 and Cys-462 form a disulfide bridge. 2 residues coordinate vanadate: Arg-480 and His-486. The cysteines at positions 544 and 555 are disulfide-linked.

Belongs to the vanadium-dependent haloperoxidase family. Homodimer; disulfide-linked. Vanadate is required as a cofactor.

The catalysed reaction is RH + Br(-) + H2O2 = RBr + 2 H2O.. Its function is as follows. Catalyzes the halogenation of organic substrates in the presence of hydrogen peroxide. The sequence is that of Vanadium-dependent bromoperoxidase from Ascophyllum nodosum (Knotted wrack).